Consider the following 446-residue polypeptide: 6-methylsalicylate 1-monooxygenase atA (446 aa).

Residues 7–27 form a helical membrane-spanning segment; that stretch reads VSVAIIGGGIGGLSLAIGLLQ. The FAD site is built by Glu37 and Ala50. An N-linked (GlcNAc...) asparagine glycan is attached at Asn107. Arg116 lines the FAD pocket. Arg200 is an active-site residue. FAD is bound by residues Asp311 and Ala324.

The protein belongs to the paxM FAD-dependent monooxygenase family. FAD is required as a cofactor.

The protein localises to the membrane. It catalyses the reaction 6-methylsalicylate + AH2 + O2 + H(+) = 3-methylcatechol + A + CO2 + H2O. It functions in the pathway secondary metabolite biosynthesis. Functionally, 6-methylsalicylate 1-monooxygenase; part of the gene cluster that mediates the biosynthesis of terreic acid, a quinone epoxide inhibitor of Bruton's tyrosine kinase. The first step of the pathway is the synthesis of 6-methylsalicylic acid (6-MSA) by the 6-methylsalicylic acid synthase atX. In the biosynthesis of 6-MSA, atX utilizes one acetyl-CoA and three malonyl-CoAs as its substrates and catalyzes a series of programmed reactions including Claisen condensation, reduction, aldol cyclization, and the hydrolytic cleavage that yields 6-MSA. The 6-methylsalicylate 1-monooxygenase atA then catalyzes the decarboxylative hydroxylation of 6-MSA to 3-methylcatechol. The next step is the conversion of 3-methylcatechol to 3-methyl-1,2,4-benzenetriol by cytochrome P450 monooxygenase atE, which is enhanced by cytochrome P450 monooxygenase atG. Then, the epoxidase atD catalyzes the epoxidation and hydroxyl oxidation of 3-methyl-1,2,4-benzenetriol to terremutin. Lastly, GMC oxidoreductase atC oxidizes terremutin to terreic acid. In Aspergillus terreus (strain NIH 2624 / FGSC A1156), this protein is 6-methylsalicylate 1-monooxygenase atA.